A 156-amino-acid chain; its full sequence is Ribonuclease H (156 aa).

The RNase H type-1 domain occupies 2 to 144 (SQFDVTVFTD…CDVLARAQAS (143 aa)). Mg(2+)-binding residues include aspartate 11, glutamate 49, aspartate 71, and aspartate 136.

Belongs to the RNase H family. Monomer. The cofactor is Mg(2+).

Its subcellular location is the cytoplasm. It catalyses the reaction Endonucleolytic cleavage to 5'-phosphomonoester.. Endonuclease that specifically degrades the RNA of RNA-DNA hybrids. The sequence is that of Ribonuclease H from Nitratidesulfovibrio vulgaris (strain ATCC 29579 / DSM 644 / CCUG 34227 / NCIMB 8303 / VKM B-1760 / Hildenborough) (Desulfovibrio vulgaris).